The sequence spans 281 residues: Oxidase pynE (281 aa).

Belongs to the avfA family.

Its pathway is secondary metabolite biosynthesis. Functionally, oxidase; part of the gene cluster that mediates the biosynthesis of pyranonigrins, a family of antioxidative compounds. The first step of pyranonigrins biosynthesis is performed by the hybrid PKS-NRPS synthetase that condenses 6 malonyl-CoA units to an acetyl starter unit, to form a 1,3,5-trioxotetradecane-6,8-dienyl-ACP. The enoyl reductase (ER) domain of pynA is likely to be functional during the first two rounds of polyketide chain extension, to generate the saturated C-C bonds of the alkyl side chain. PynA subsequently forms the amide bond between the acyl chain and L-serine. Although pynA has a terminal reductase domain, it appears to require the thioesterase pynI for the release of the straight-chain intermediate from pynA via the formation of a tetramic acid pyranonigrin J. The methyltransferase pynC then coverts pyranonigrin J to pyranonigrin I via N-methylation. The FAD-dependent monooxygenase pynG catalyzes an epoxidation-mediated cyclization to form the dihydro-gamma-pyrone moiety, followed by pynD-catalyzed oxidation of the alcohol to the ketone and enolization to yield the characteristic tetramic acid-fused gamma-pyrone core of pyranonigrin H. Pyranonigrin H is substrate of pynH for dehydration-mediated exo-methylene formation from the serine side chain to produce pyranonigrin E, before the oxidase pynE reduces the exo-methylene of pyranonigrin E into a pendant methyl to form pyranonigrin G. The FAD-linked oxidoreductase pynB performs the reverse reaction and converts pyranonigrin G back to pyranonigrin E. This is Oxidase pynE from Aspergillus niger (strain ATCC MYA-4892 / CBS 513.88 / FGSC A1513).